The primary structure comprises 154 residues: Ribosome maturation factor RimP (154 aa).

It belongs to the RimP family.

Its subcellular location is the cytoplasm. Functionally, required for maturation of 30S ribosomal subunits. The sequence is that of Ribosome maturation factor RimP from Finegoldia magna (strain ATCC 29328 / DSM 20472 / WAL 2508) (Peptostreptococcus magnus).